A 1006-amino-acid chain; its full sequence is Probable beta-galactosidase A (1006 aa).

The first 18 residues, Met-1–Gly-18, serve as a signal peptide directing secretion. Substrate contacts are provided by Tyr-96, Asn-140, Ala-141, and Glu-142. N-linked (GlcNAc...) asparagine glycosylation occurs at Asn-156. Asn-199 provides a ligand contact to substrate. Glu-200 acts as the Proton donor in catalysis. A disulfide bridge connects residues Cys-205 and Cys-206. Tyr-260 is a binding site for substrate. Residues Cys-266 and Cys-315 are joined by a disulfide bond. Catalysis depends on Glu-298, which acts as the Nucleophile. Tyr-364 serves as a coordination point for substrate. N-linked (GlcNAc...) asparagine glycans are attached at residues Asn-373, Asn-402, Asn-422, Asn-622, Asn-760, Asn-777, and Asn-914.

The protein belongs to the glycosyl hydrolase 35 family.

The protein localises to the secreted. It carries out the reaction Hydrolysis of terminal non-reducing beta-D-galactose residues in beta-D-galactosides.. Its function is as follows. Cleaves beta-linked terminal galactosyl residues from gangliosides, glycoproteins, and glycosaminoglycans. This chain is Probable beta-galactosidase A (lacA), found in Aspergillus fumigatus (strain CBS 144.89 / FGSC A1163 / CEA10) (Neosartorya fumigata).